We begin with the raw amino-acid sequence, 259 residues long: Phosphonates import ATP-binding protein PhnC (259 aa).

Residues 4–245 (ISIQSVTKRF…ALRTIYQREG (242 aa)) form the ABC transporter domain. Residue 37–44 (GPSGAGKS) participates in ATP binding.

The protein belongs to the ABC transporter superfamily. Phosphonates importer (TC 3.A.1.9.1) family. In terms of assembly, the complex is composed of two ATP-binding proteins (PhnC), two transmembrane proteins (PhnE) and a solute-binding protein (PhnD).

It localises to the cell inner membrane. It carries out the reaction phosphonate(out) + ATP + H2O = phosphonate(in) + ADP + phosphate + H(+). Functionally, part of the ABC transporter complex PhnCDE involved in phosphonates import. Responsible for energy coupling to the transport system. This Thiobacillus denitrificans (strain ATCC 25259 / T1) protein is Phosphonates import ATP-binding protein PhnC.